A 323-amino-acid chain; its full sequence is Solute carrier family 35 member B1 (323 aa).

8 consecutive transmembrane segments (helical) span residues 15 to 35, 51 to 71, 85 to 105, 136 to 156, 169 to 189, 205 to 225, 253 to 273, and 286 to 306; these read LVCF…QETI, FALS…KLLI, WLYA…NSAL, YPLS…LFMY, TFGY…LTGV, MMLY…VFTG, LGQT…CSII, and VILF…LVFL. A Di-lysine motif motif is present at residues 319-323; it reads KKPSH.

The protein belongs to the nucleotide-sugar transporter family. SLC35B subfamily.

The protein localises to the endoplasmic reticulum membrane. Probable sugar transporter. This chain is Solute carrier family 35 member B1 (slc35b1), found in Xenopus tropicalis (Western clawed frog).